The following is a 38-amino-acid chain: Potassium channel toxin alpha-KTx 6.4 (38 aa).

Cystine bridges form between C6/C27, C12/C32, C16/C34, and C22/C37.

The protein belongs to the short scorpion toxin superfamily. Potassium channel inhibitor family. Alpha-KTx 06 subfamily. Expressed by the venom gland.

It localises to the secreted. In terms of biological role, potently, completely and reversibly blocks voltage-gated potassium channel Kv1.2/KCNA2 and Shaker B (Sh). Also blocks small conductance (SK) calcium-activated potassium channel (KCNN). The chain is Potassium channel toxin alpha-KTx 6.4 from Pandinus imperator (Emperor scorpion).